The sequence spans 316 residues: DNA-directed RNA polymerase subunit alpha (316 aa).

The interval methionine 1–glutamate 233 is alpha N-terminal domain (alpha-NTD). The interval methionine 245–aspartate 316 is alpha C-terminal domain (alpha-CTD).

It belongs to the RNA polymerase alpha chain family. In terms of assembly, in plastids the minimal PEP RNA polymerase catalytic core is composed of four subunits: alpha, beta, beta', and beta''. When a (nuclear-encoded) sigma factor is associated with the core the holoenzyme is formed, which can initiate transcription.

The protein resides in the plastid. Its subcellular location is the chloroplast. The enzyme catalyses RNA(n) + a ribonucleoside 5'-triphosphate = RNA(n+1) + diphosphate. Its function is as follows. DNA-dependent RNA polymerase catalyzes the transcription of DNA into RNA using the four ribonucleoside triphosphates as substrates. In Cyanidioschyzon merolae (strain NIES-3377 / 10D) (Unicellular red alga), this protein is DNA-directed RNA polymerase subunit alpha.